Reading from the N-terminus, the 447-residue chain is Glutamyl-tRNA(Gln) amidotransferase subunit A (447 aa).

Residues lysine 50 and serine 125 each act as charge relay system in the active site. The active-site Acyl-ester intermediate is serine 149.

This sequence belongs to the amidase family. GatA subfamily. As to quaternary structure, heterotrimer of A, B and C subunits.

The enzyme catalyses L-glutamyl-tRNA(Gln) + L-glutamine + ATP + H2O = L-glutaminyl-tRNA(Gln) + L-glutamate + ADP + phosphate + H(+). Allows the formation of correctly charged Gln-tRNA(Gln) through the transamidation of misacylated Glu-tRNA(Gln) in organisms which lack glutaminyl-tRNA synthetase. The reaction takes place in the presence of glutamine and ATP through an activated gamma-phospho-Glu-tRNA(Gln). The chain is Glutamyl-tRNA(Gln) amidotransferase subunit A from Sulfurimonas denitrificans (strain ATCC 33889 / DSM 1251) (Thiomicrospira denitrificans (strain ATCC 33889 / DSM 1251)).